Here is a 957-residue protein sequence, read N- to C-terminus: Glycine dehydrogenase (decarboxylating) (957 aa).

An N6-(pyridoxal phosphate)lysine modification is found at Lys708.

It belongs to the GcvP family. The glycine cleavage system is composed of four proteins: P, T, L and H. Pyridoxal 5'-phosphate is required as a cofactor.

It carries out the reaction N(6)-[(R)-lipoyl]-L-lysyl-[glycine-cleavage complex H protein] + glycine + H(+) = N(6)-[(R)-S(8)-aminomethyldihydrolipoyl]-L-lysyl-[glycine-cleavage complex H protein] + CO2. Its function is as follows. The glycine cleavage system catalyzes the degradation of glycine. The P protein binds the alpha-amino group of glycine through its pyridoxal phosphate cofactor; CO(2) is released and the remaining methylamine moiety is then transferred to the lipoamide cofactor of the H protein. This Shigella dysenteriae serotype 1 (strain Sd197) protein is Glycine dehydrogenase (decarboxylating).